The sequence spans 1768 residues: MRRQRPSVATARDAPSLEVYNIIPIHDFLTEHPSLRYPEVRAAAAALRIVGDLPKPPFADFTPRMDLMDWLGLLFGFQIDNVRNQRENLVLHLANSQMRLQPPPRHPDGLDPTVLRRFRKKLLRNYTNWCSFLGVRCHVTSPIQSRHQTNAVLNLRRELLYVALYLLIWGESANLRFMPECLCYIFHHMAMELNKVLAGEFDDMTGMPYWPSFSGDCAFLKSVVMPIYKTVKTEVESSNNGTKPHSAWRNYDDINEYFWSKRALKSLKWPLDYTSNFFDTTPKSSRVGKTGFVEQRSFWNVYRSFDRLWILLLLYLQAAIIVATSDVKFPWQDRDVEVALLTVFISWAGLRLLQSVLDASTQYSLVSRETYWLFIRLTLKFVVAVAWTVLFSVFYARIWSQKNKDGVWSRAANERVVTFLKVVFVYVIPELLALVLFIVPCIRNWVEELNLGVVYFLTWWFYSKTFVGRGMREGLVDNVKYTLFWIIVLATKFIFSYFLQIRPLIAPTRALLNLKDATYNWHEFFGSTHRIAVGMLWLPVILVYLMDLQIWYSIYSSLVGATIGLFSHLGEIRNIDQLRLRFQFFSSAMQFNLKPEEHLLSPKATMLKKARDAIHRLKLRYGIGQPFNKIESSQVEATWFALIWNEIILTFREEDLISDREVELLELPPNCWNIRVIRWPCFLLCNELLLALSQANELCDAPDHWLWSKICSSEYRRCAVMEAFDSIKFVILKIVKNGTEEESILNRLFMEIDENVENEKITEVYKLTVLLRIHEKLISLLERLMDPEKKVFRIVNILQALYELCAWEFPKTRRSTPQLRQLGLAPISLEADTELLFVNAINLPPLDDVVFYRQIRRVHTILTSRDPMHNVPKNIEARERLAFFSNSLFMTMPQAPSVEKMMAFSVLTPYYDEEVMYRQEMLRAENEDGISTLFYLQRIYEDEWVNFLERMRREGAENENDIWSKKVRDLRLWASYRGQTLSRTVRGMMYYYSALKKLAFLDSASEMDIRMGTQIAPEARRSYYTNDGGDNTLQPTPSQEISRMASGITHLLKGSEYGSAMMKFTYVVACQVYGQHKARGDHRAEEILFLMKNHDALRIAYVDEVDLGRGEVEYYSVLVKFDQQLQREVEIYRIRLPGPLKLGEGKPENQNHALIFTRGDAIQTIDMNQDNHFEEALKMRNLLESFKTYYGIRKPTILGVREKVFTGSVSSLAWFMSAQETSFVTLGQRVLANPLKVRMHYGHPDVFDRFWFVPRGGISKASRVINISEDIFAGFNCTLRGGNVTHHEYIQVGKGRDVGLNQISMFEAKVASGNGEQALSRDVYRLGHRLDFFRMLSFFYTTVGYYFNTMLIVFTVYAFLWGRLYLALSGVEKIAKDRSSSNEALGAILNQQFIIQLGLFTALPMILENSLERGFLPAVWDFITMQLQLASFFYTFSMGTRTHYFGRTILHGGAKYRATGRGFVVEHKKFAENYRLYARTHFIKAIELAIILLVYAAYSPLAKSSFVYILMTISSWFLITSWIISPFLFNPSGFDWLKTVNDFDDFIAWLWSRGGLFTKADQSWFTWWNEEQEHLKTTGVWGKLLEIILDLRFFFFQYSIVYHLRIAENRTSIGVYLISWGCIIGIVAIYITTIYAQKRYSVKEHIKYRFIQFLVILLTVLVVVMMLQFTKLTVVDLLISLLAFVPTGWGLISIAQVLKPFLLSTVVWDTVISVARFYDLFFGLIVMAPVALLSWLPGFQNMQTRILFNEAFSRGLQISIILAGKKST.

Over 1–308 (MRRQRPSVAT…WNVYRSFDRL (308 aa)) the chain is Cytoplasmic. A helical transmembrane segment spans residues 309–329 (WILLLLYLQAAIIVATSDVKF). At 330-335 (PWQDRD) the chain is on the extracellular side. A helical transmembrane segment spans residues 336 to 356 (VEVALLTVFISWAGLRLLQSV). Topologically, residues 357–370 (LDASTQYSLVSRET) are cytoplasmic. The chain crosses the membrane as a helical span at residues 371–391 (YWLFIRLTLKFVVAVAWTVLF). The Extracellular portion of the chain corresponds to 392-421 (SVFYARIWSQKNKDGVWSRAANERVVTFLK). The chain crosses the membrane as a helical span at residues 422 to 442 (VVFVYVIPELLALVLFIVPCI). Residues 443–480 (RNWVEELNLGVVYFLTWWFYSKTFVGRGMREGLVDNVK) lie on the Cytoplasmic side of the membrane. Residues 481–501 (YTLFWIIVLATKFIFSYFLQI) traverse the membrane as a helical segment. At 502 to 530 (RPLIAPTRALLNLKDATYNWHEFFGSTHR) the chain is on the extracellular side. Residues 531–551 (IAVGMLWLPVILVYLMDLQIW) traverse the membrane as a helical segment. Topologically, residues 552–1341 (YSIYSSLVGA…FFRMLSFFYT (790 aa)) are cytoplasmic. A helical membrane pass occupies residues 1342 to 1362 (TVGYYFNTMLIVFTVYAFLWG). Residues 1363–1386 (RLYLALSGVEKIAKDRSSSNEALG) are Extracellular-facing. The chain crosses the membrane as a helical span at residues 1387-1407 (AILNQQFIIQLGLFTALPMIL). Over 1408 to 1413 (ENSLER) the chain is Cytoplasmic. Residues 1414–1434 (GFLPAVWDFITMQLQLASFFY) traverse the membrane as a helical segment. Over 1435-1481 (TFSMGTRTHYFGRTILHGGAKYRATGRGFVVEHKKFAENYRLYARTH) the chain is Extracellular. The helical transmembrane segment at 1482-1502 (FIKAIELAIILLVYAAYSPLA) threads the bilayer. The Cytoplasmic segment spans residues 1503–1508 (KSSFVY). Residues 1509–1529 (ILMTISSWFLITSWIISPFLF) form a helical membrane-spanning segment. Over 1530-1583 (NPSGFDWLKTVNDFDDFIAWLWSRGGLFTKADQSWFTWWNEEQEHLKTTGVWGK) the chain is Extracellular. Residues 1584–1604 (LLEIILDLRFFFFQYSIVYHL) traverse the membrane as a helical segment. Residues 1605-1612 (RIAENRTS) are Cytoplasmic-facing. A helical transmembrane segment spans residues 1613 to 1633 (IGVYLISWGCIIGIVAIYITT). Topologically, residues 1634–1649 (IYAQKRYSVKEHIKYR) are extracellular. A helical transmembrane segment spans residues 1650–1670 (FIQFLVILLTVLVVVMMLQFT). The Cytoplasmic segment spans residues 1671–1673 (KLT). A helical transmembrane segment spans residues 1674 to 1694 (VVDLLISLLAFVPTGWGLISI). At 1695 to 1719 (AQVLKPFLLSTVVWDTVISVARFYD) the chain is on the extracellular side. The helical transmembrane segment at 1720–1740 (LFFGLIVMAPVALLSWLPGFQ) threads the bilayer. Topologically, residues 1741 to 1768 (NMQTRILFNEAFSRGLQISIILAGKKST) are cytoplasmic.

This sequence belongs to the glycosyltransferase 48 family. In terms of tissue distribution, ubiquitous.

It localises to the cell membrane. It carries out the reaction [(1-&gt;3)-beta-D-glucosyl](n) + UDP-alpha-D-glucose = [(1-&gt;3)-beta-D-glucosyl](n+1) + UDP + H(+). In terms of biological role, required the formation of the callose wall separating the tetraspores (interstitial wall), but not for the callose wall surrounding the pollen mother cells (peripheral wall). Functionally redudant to CALS12 (GSL5). During plant growth and development, callose is found as a transitory component of the cell plate in dividing cells, is a major component of pollen mother cell walls and pollen tubes, and is found as a structural component of plasmodesmatal canals. This is Callose synthase 11 (CALS11) from Arabidopsis thaliana (Mouse-ear cress).